The chain runs to 400 residues: Putative transposase for insertion sequence element IS5376 (400 aa).

In terms of domain architecture, HTH IS21-type spans 5–67 (GEFFMIKEMY…PFKPYLQKRM (63 aa)). A DNA-binding region (H-T-H motif) is located at residues 20–39 (ISDIARELGIDRKTVRKYIH). The tract at residues 35–55 (RKYIHSPNPPSKSKRKQRKSK) is disordered. Residues 113-287 (YETLPGEQMQ…SPQERWAEES (175 aa)) form the Integrase catalytic domain.

This sequence belongs to the transposase IS21/IS408/IS1162 family.

In terms of biological role, involved in the transposition of the insertion sequence. The chain is Putative transposase for insertion sequence element IS5376 from Geobacillus stearothermophilus (Bacillus stearothermophilus).